The following is a 335-amino-acid chain: tRNA N6-adenosine threonylcarbamoyltransferase (335 aa).

Positions 111, 115, and 132 each coordinate Fe cation. Substrate contacts are provided by residues 132-136 (YVSGG), D164, G177, E181, and N260. D288 serves as a coordination point for Fe cation.

This sequence belongs to the KAE1 / TsaD family. As to quaternary structure, monomer. Component of the KEOPS complex that consists of Kae1, Bud32, Cgi121 and Pcc1; the whole complex dimerizes. Requires Fe(2+) as cofactor.

Its subcellular location is the cytoplasm. It catalyses the reaction L-threonylcarbamoyladenylate + adenosine(37) in tRNA = N(6)-L-threonylcarbamoyladenosine(37) in tRNA + AMP + H(+). Its function is as follows. Required for the formation of a threonylcarbamoyl group on adenosine at position 37 (t(6)A37) in tRNAs that read codons beginning with adenine. Is a component of the KEOPS complex that is probably involved in the transfer of the threonylcarbamoyl moiety of threonylcarbamoyl-AMP (TC-AMP) to the N6 group of A37. Kae1 likely plays a direct catalytic role in this reaction, but requires other protein(s) of the complex to fulfill this activity. The chain is tRNA N6-adenosine threonylcarbamoyltransferase from Methanococcoides burtonii (strain DSM 6242 / NBRC 107633 / OCM 468 / ACE-M).